The chain runs to 379 residues: MGLNDWLGTFAKAEGLDLSSDLEQAYEAALMIQGLELEYFNDRPVRTDVNLGLPQATQTQIFRRFRSALEICRALLSSIERQRAQLDSQELRQLQLIESVVRRYRSKDGQTLFQRPDPLPRSLLGVFDRVRNQLDPEAEANVVAGFRRRRDSTLVSLRILLLMILVPLLLQQISRTYVISPLVDRIAPDIPFLSYTKPRLQQSAVASLREYKAEIEFAALLEGEDSPSVEELRQKLTLKAAELKDEADSESTTAIKNVLADVVATIGFVLVCLFGRDEIRVLRGFFDEVVYGLSDNAKAFVIILFTDIFVGFHSPEGWTVLLQGISSHLGIPAEEQFIDLFIATFPVILATIFKYWIFRYLNRVSPSSVTTLRGMNGGG.

4 helical membrane passes run 153 to 173, 254 to 274, 300 to 320, and 337 to 357; these read TLVS…LQQI, AIKN…VCLF, FVII…GWTV, and FIDL…KYWI.

Belongs to the CemA family.

The protein resides in the cell inner membrane. In terms of biological role, required for H(+) efflux immediately after light irradiation to form a rapid H(+) concentration gradient across the thylakoid membranes. Together with PxcL, contributes to transient H(+) uptake following dark to light transition. This is Proton extrusion protein PxcA from Synechococcus sp. (strain RCC307).